Here is a 90-residue protein sequence, read N- to C-terminus: uncharacterized protein (90 aa).

This is an uncharacterized protein from Aedes vexans (Inland floodwater mosquito).